Consider the following 147-residue polypeptide: Hemoglobin subunit beta-1 (147 aa).

In terms of domain architecture, Globin spans 3-147 (EWTATERTHI…VVSALGRQYH (145 aa)). Residues histidine 64 and histidine 93 each coordinate heme b.

The protein belongs to the globin family. In terms of assembly, hb 1 is a heterotetramer of two alpha-1 and two beta-1 chains. Hb 2 is a heterotetramer of two alpha-2 and two beta-1 chains. In terms of tissue distribution, red blood cells.

In terms of biological role, involved in oxygen transport from gills to the various peripheral tissues. The protein is Hemoglobin subunit beta-1 (hbb1) of Boreogadus saida (Polar cod).